The primary structure comprises 515 residues: Iridoid oxidase (515 aa).

2 helical membrane passes run 8–28 (SLNP…IIFV) and 180–200 (AVQL…NLML). Cys-455 is a heme binding site.

This sequence belongs to the cytochrome P450 family. As to expression, expressed in the leaf internal phloem-associated parenchyma (IPAP) inside the mesophyll.

It is found in the endoplasmic reticulum membrane. It carries out the reaction (+)-cis-trans-nepetalactol + 3 reduced [NADPH--hemoprotein reductase] + 3 O2 = 7-deoxyloganetate + 3 oxidized [NADPH--hemoprotein reductase] + 4 H2O + 4 H(+). It participates in alkaloid biosynthesis. Its function is as follows. Component of the seco-iridoid and derivatives monoterpenoid indole alkaloids (MIAs, e.g. vincristine, quinine, and strychnine) biosynthesis pathway. Catalyzes the conversion of cis-trans-nepetalactol (iridodial) into 7-deoxyloganetic acid. Also converts iridotrial into 7-deoxyloganetic acid. The chain is Iridoid oxidase from Catharanthus roseus (Madagascar periwinkle).